Reading from the N-terminus, the 392-residue chain is Speckle-type POZ protein-like (392 aa).

The MATH domain maps to 31-161 (KFSYMWTINN…DDKLTLFCEV (131 aa)). The BTB domain maps to 200–267 (TDCSFFVRGQ…IYTGRAPNLD (68 aa)).

This sequence belongs to the Tdpoz family. As to quaternary structure, homodimer. Heterodimer with SPOP. Component of cullin-RING-based BCR (BTB-CUL3-RBX1) E3 ubiquitin-protein ligase complexes containing homodimeric SPOPL or the heterodimer formed by SPOP and SPOPL. Interacts with CUL3 and MACROH2A1.

Its subcellular location is the nucleus. It functions in the pathway protein modification; protein ubiquitination. Its function is as follows. Component of a cullin-RING-based BCR (BTB-CUL3-RBX1) E3 ubiquitin-protein ligase complex that mediates the ubiquitination and subsequent proteasomal degradation of target proteins, but with relatively low efficiency. Cullin-RING-based BCR (BTB-CUL3-RBX1) E3 ubiquitin-protein ligase complexes containing homodimeric SPOPL or the heterodimer formed by SPOP and SPOPL are less efficient than ubiquitin ligase complexes containing only SPOP. May function to down-regulate the activity of cullin-RING-based BCR (BTB-CUL3-RBX1) E3 ubiquitin-protein ligase complexes that contain SPOP. In Homo sapiens (Human), this protein is Speckle-type POZ protein-like (SPOPL).